The chain runs to 1233 residues: uncharacterized protein (1233 aa).

Disordered regions lie at residues Met-1–Asn-39, Gln-65–Ser-116, Ala-160–Ser-211, Glu-250–Arg-577, Asp-594–Lys-825, Asn-851–Lys-872, and Glu-902–Lys-955. Over residues Lys-72–Asn-83 the composition is skewed to basic residues. At Ser-180 the chain carries Phosphoserine. Positions Thr-183–Arg-199 are enriched in basic residues. Residues Ser-201–Ser-211 show a composition bias toward polar residues. 2 stretches are compositionally biased toward basic and acidic residues: residues Glu-250–Ser-280 and Asn-287–Asn-300. Residues Gly-329–Gly-345 show a composition bias toward polar residues. Basic and acidic residues-rich tracts occupy residues Lys-349–Gly-370 and Asn-379–Val-408. Residues Asn-409–Gly-422 are compositionally biased toward polar residues. The residue at position 462 (Ser-462) is a Phosphoserine. Residues Glu-466–Asn-478 show a composition bias toward acidic residues. Composition is skewed to basic and acidic residues over residues Val-484–Arg-497, Ser-508–Glu-527, Asp-594–Ala-622, Glu-631–Glu-672, and Arg-684–Pro-711. Ser-523 carries the phosphoserine modification. The segment covering Gln-728–Thr-739 has biased composition (polar residues). Residues Phe-753–Ala-783 are compositionally biased toward basic and acidic residues. Acidic residues predominate over residues Glu-855–Glu-868. Thr-861 is modified (phosphothreonine). Composition is skewed to basic and acidic residues over residues Ser-910–Glu-920 and Glu-935–Asp-948. Ser-975 carries the post-translational modification Phosphoserine. Disordered stretches follow at residues Leu-984 to Ala-1071 and Lys-1109 to Asp-1128. Positions Glu-986 to Asp-999 are enriched in basic and acidic residues. A phosphoserine mark is found at Ser-1037 and Ser-1046. Composition is skewed to basic and acidic residues over residues Gln-1062–Ala-1071 and Gln-1118–Gln-1127. The region spanning Thr-1132 to Ile-1233 is the Glutaredoxin domain.

This is an uncharacterized protein from Saccharomyces cerevisiae (strain ATCC 204508 / S288c) (Baker's yeast).